The following is a 210-amino-acid chain: 3-demethoxyubiquinol 3-hydroxylase (210 aa).

6 residues coordinate Fe cation: Glu59, Glu89, His92, Glu141, Glu173, and His176.

This sequence belongs to the COQ7 family. Fe cation is required as a cofactor.

The protein resides in the cell membrane. The catalysed reaction is a 5-methoxy-2-methyl-3-(all-trans-polyprenyl)benzene-1,4-diol + AH2 + O2 = a 3-demethylubiquinol + A + H2O. It participates in cofactor biosynthesis; ubiquinone biosynthesis. Catalyzes the hydroxylation of 2-nonaprenyl-3-methyl-6-methoxy-1,4-benzoquinol during ubiquinone biosynthesis. The chain is 3-demethoxyubiquinol 3-hydroxylase from Albidiferax ferrireducens (strain ATCC BAA-621 / DSM 15236 / T118) (Rhodoferax ferrireducens).